The following is a 469-amino-acid chain: MGSFGMDWNQKSSVLWDWENMPPIGNSANENPKNVMLAESKLAGVGVDIGHESGHSSGGTFSSSSEIGYGSSKSSISASIDSPSKVGNTIELNFASAEEHDKNMDKGKSKVDDTGTSRSPVVAANRVEPLIGLKLGKRTYFEDVCGGQNVKSSPSGVSVATPSPGLAKKVKVAQQNTQNPHCQVEGCNVDLSSAKPYHRKHRVCEPHSKTLKVIVAGLERRFCQQCSRFHGLAEFDQKKRSCRRRLHDHNARRRKPQPEAISLSSSRLSTLLYGDARQQASFLFGQAPYGQMGSCASSWDNPVPGGFKFTATKAPWSRPTIAAGVDGTHVSNQQASGNVLPHGAHHSFDGLMAFKETNAKVLNQGMEASAVASGSARGPDFEHALSLLSIDSVGAANLQPGSQIHPGVTAIAGTSNPVMMPSPAIWQGGLSLDQQAQFQAFDRLGNDDDEDHLQLPKPSYDNSHYDQMN.

Residues 96–118 (SAEEHDKNMDKGKSKVDDTGTSR) are disordered. The segment covering 97-115 (AEEHDKNMDKGKSKVDDTG) has biased composition (basic and acidic residues). An SBP-type zinc finger spans residues 179-256 (NPHCQVEGCN…HDHNARRRKP (78 aa)). C182, C187, C204, H207, C223, C226, H230, and C242 together coordinate Zn(2+). Positions 239-255 (KRSCRRRLHDHNARRRK) match the Bipartite nuclear localization signal motif. The disordered stretch occupies residues 446-469 (NDDDEDHLQLPKPSYDNSHYDQMN). Residues 460–469 (YDNSHYDQMN) are compositionally biased toward polar residues.

As to expression, ubiquitous.

It localises to the nucleus. Functionally, trans-acting factor that binds specifically to the consensus nucleotide sequence 5'-TNCGTACAA-3'. May be involved in panicle development. The polypeptide is Squamosa promoter-binding-like protein 3 (SPL3) (Oryza sativa subsp. indica (Rice)).